We begin with the raw amino-acid sequence, 177 residues long: Large ribosomal subunit protein uL6 (177 aa).

Residue lysine 44 is modified to N6-acetyllysine.

The protein belongs to the universal ribosomal protein uL6 family. Part of the 50S ribosomal subunit.

This protein binds to the 23S rRNA, and is important in its secondary structure. It is located near the subunit interface in the base of the L7/L12 stalk, and near the tRNA binding site of the peptidyltransferase center. This is Large ribosomal subunit protein uL6 from Escherichia coli O139:H28 (strain E24377A / ETEC).